The primary structure comprises 127 residues: Glycine cleavage system H protein (127 aa).

In terms of domain architecture, Lipoyl-binding spans 22–104 (KARIGITHFA…YEKAWMIVVE (83 aa)). K63 carries the post-translational modification N6-lipoyllysine.

This sequence belongs to the GcvH family. In terms of assembly, the glycine cleavage system is composed of four proteins: P, T, L and H. It depends on (R)-lipoate as a cofactor.

Functionally, the glycine cleavage system catalyzes the degradation of glycine. The H protein shuttles the methylamine group of glycine from the P protein to the T protein. Is also involved in protein lipoylation via its role as an octanoyl/lipoyl carrier protein intermediate. This is Glycine cleavage system H protein from Bacillus subtilis (strain 168).